The chain runs to 349 residues: Isopentenyl-diphosphate delta-isomerase (349 aa).

Substrate is bound at residue 8-9 (RK). Residues S66, 67-69 (SMT), S97, and N125 contribute to the FMN site. 97-99 (STR) contacts substrate. Q160 provides a ligand contact to substrate. E161 lines the Mg(2+) pocket. FMN-binding positions include K192, T222, 272-274 (GMK), and 293-294 (AR).

Belongs to the IPP isomerase type 2 family. In terms of assembly, homooctamer. Dimer of tetramers. FMN is required as a cofactor. NADPH serves as cofactor. The cofactor is Mg(2+).

The protein resides in the cytoplasm. It catalyses the reaction isopentenyl diphosphate = dimethylallyl diphosphate. In terms of biological role, involved in the biosynthesis of isoprenoids. Catalyzes the 1,3-allylic rearrangement of the homoallylic substrate isopentenyl (IPP) to its allylic isomer, dimethylallyl diphosphate (DMAPP). The sequence is that of Isopentenyl-diphosphate delta-isomerase from Oceanobacillus iheyensis (strain DSM 14371 / CIP 107618 / JCM 11309 / KCTC 3954 / HTE831).